A 276-amino-acid chain; its full sequence is Shikimate dehydrogenase (NADP(+)) (276 aa).

Residues 15 to 17 (SKS) and Thr-62 each bind shikimate. Residue Lys-66 is the Proton acceptor of the active site. Shikimate contacts are provided by Asn-87 and Asp-103. NADP(+)-binding positions include 127-131 (GAGGA), 151-156 (NRTLSK), and Met-215. Residue Tyr-217 participates in shikimate binding. Residue Gly-239 participates in NADP(+) binding.

It belongs to the shikimate dehydrogenase family. In terms of assembly, homodimer.

It carries out the reaction shikimate + NADP(+) = 3-dehydroshikimate + NADPH + H(+). It participates in metabolic intermediate biosynthesis; chorismate biosynthesis; chorismate from D-erythrose 4-phosphate and phosphoenolpyruvate: step 4/7. In terms of biological role, involved in the biosynthesis of the chorismate, which leads to the biosynthesis of aromatic amino acids. Catalyzes the reversible NADPH linked reduction of 3-dehydroshikimate (DHSA) to yield shikimate (SA). This is Shikimate dehydrogenase (NADP(+)) from Cellvibrio japonicus (strain Ueda107) (Pseudomonas fluorescens subsp. cellulosa).